Here is a 464-residue protein sequence, read N- to C-terminus: Alpha-1,6-mannosyl-glycoprotein 4-beta-N-acetylglucosaminyltransferase (464 aa).

Residues 1 to 10 lie on the Cytoplasmic side of the membrane; it reads MRCSPKRSLT. A helical; Signal-anchor for type II membrane protein membrane pass occupies residues 11 to 31; it reads AVIAASFLLLLLLLLLHRGSW. Topologically, residues 32 to 464 are lumenal; that stretch reads QDPQEVQFRD…QSIGIWTAGT (433 aa). 2 N-linked (GlcNAc...) asparagine glycosylation sites follow: Asn70 and Asn201.

Belongs to the glycosyltransferase 54 family. A divalent metal cation serves as cofactor. In terms of tissue distribution, highly expressed in oviduct, spleen, lung and colon.

The protein localises to the golgi apparatus membrane. It catalyses the reaction N(4)-{beta-D-GlcNAc-(1-&gt;2)-[beta-D-GlcNAc-(1-&gt;4)]-alpha-D-Man-(1-&gt;3)-[beta-D-GlcNAc-(1-&gt;2)-[beta-D-GlcNAc-(1-&gt;6)]-alpha-D-Man-(1-&gt;6)]-beta-D-Man-(1-&gt;4)-beta-D-GlcNAc-(1-&gt;4)-beta-D-GlcNAc}-L-asparaginyl-[protein] + UDP-N-acetyl-alpha-D-glucosamine = N(4)-{beta-D-GlcNAc-(1-&gt;2)-[beta-D-GlcNAc-(1-&gt;4)]-alpha-D-Man-(1-&gt;3)-[beta-D-GlcNAc-(1-&gt;2)-[beta-D-GlcNAc-(1-&gt;4)]-[beta-D-GlcNAc-(1-&gt;6)]-alpha-D-Man-(1-&gt;6)]-beta-D-Man-(1-&gt;4)-beta-D-GlcNAc-(1-&gt;4)-beta-D-GlcNAc}-L-asparaginyl-[protein] + UDP + H(+). It functions in the pathway protein modification; protein glycosylation. Functionally, glycosyltransferase that catalyzes the transfer of GlcNAc to the Manalpha1-6 arm to form GlcNAcBeta1-4Manalpha1-6 linkage (also named 'GnT-VI' activity). May also participate in the transfer of N-acetylglucosamine (GlcNAc) to the core mannose residues of N-linked glycans by catalyzing the formation of the GlcNAcbeta1-4 branch on the GlcNAcbeta1-2Manalpha1-3 arm of the core structure of N-linked glycans. This is Alpha-1,6-mannosyl-glycoprotein 4-beta-N-acetylglucosaminyltransferase (MGAT4C) from Gallus gallus (Chicken).